Here is a 361-residue protein sequence, read N- to C-terminus: Peptide chain release factor 1 (361 aa).

Gln237 is subject to N5-methylglutamine. Residues 284 to 296 (EDEKRRSEEDSTR) show a composition bias toward basic and acidic residues. The disordered stretch occupies residues 284 to 305 (EDEKRRSEEDSTRRNLVSSGDR).

The protein belongs to the prokaryotic/mitochondrial release factor family. Post-translationally, methylated by PrmC. Methylation increases the termination efficiency of RF1.

It is found in the cytoplasm. In terms of biological role, peptide chain release factor 1 directs the termination of translation in response to the peptide chain termination codons UAG and UAA. This is Peptide chain release factor 1 from Shewanella piezotolerans (strain WP3 / JCM 13877).